Reading from the N-terminus, the 344-residue chain is Tripartite motif-containing protein 44 (344 aa).

2 disordered regions span residues 1–25 (MASGVGAAFEELPHDGTCDECEPDE) and 68–165 (TPPA…EFDP). The segment covering 75–92 (GAGKEEAEVKVEQEREIE) has biased composition (basic and acidic residues). A compositionally biased stretch (acidic residues) spans 93–165 (SEAGEESESE…ETEAESEFDP (73 aa)). The segment at 174–215 (VAKRKCPDHGLDLSTYCQEDRQLICVLCPVIGAHQGHQLSTL) adopts a B box-type zinc-finger fold. Zn(2+)-binding residues include cysteine 179, histidine 182, cysteine 201, and histidine 207. Residues 290-325 (AHVTEILADIQSHMDRLMTQMAQAKEQLDTSNESAE) are a coiled coil. The segment at 309–344 (QMAQAKEQLDTSNESAEPKAEGDEEGPSGASEEEDT) is disordered. Acidic residues predominate over residues 330–344 (GDEEGPSGASEEEDT). 2 positions are modified to phosphoserine: serine 336 and serine 339.

As to quaternary structure, interacts (via coiled coil) with TRIM17 (via coiled coil).

May play a role in the process of differentiation and maturation of neuronal cells. May regulate the activity of TRIM17. Is a negative regulator of PAX6 expression. In Pongo abelii (Sumatran orangutan), this protein is Tripartite motif-containing protein 44 (TRIM44).